Consider the following 370-residue polypeptide: Putative agmatine deiminase (370 aa).

Residue Cys361 is the Amidino-cysteine intermediate of the active site.

It belongs to the agmatine deiminase family.

It carries out the reaction agmatine + H2O = N-carbamoylputrescine + NH4(+). This is Putative agmatine deiminase from Shewanella sp. (strain MR-7).